A 196-amino-acid chain; its full sequence is Elongation factor Ts (196 aa).

The tract at residues Thr80–Val83 is involved in Mg(2+) ion dislocation from EF-Tu.

It belongs to the EF-Ts family.

Its subcellular location is the cytoplasm. In terms of biological role, associates with the EF-Tu.GDP complex and induces the exchange of GDP to GTP. It remains bound to the aminoacyl-tRNA.EF-Tu.GTP complex up to the GTP hydrolysis stage on the ribosome. In Thermus thermophilus (strain ATCC BAA-163 / DSM 7039 / HB27), this protein is Elongation factor Ts.